The sequence spans 605 residues: Probable serine/threonine-protein kinase DDB_G0286481 (605 aa).

A helical membrane pass occupies residues 5-25 (YQIFFLLYLLCILYVISCGYI). The N-linked (GlcNAc...) asparagine glycan is linked to N53. Composition is skewed to low complexity over residues 54–81 (SSNN…NNNN) and 89–104 (NCNN…NKSN). A disordered region spans residues 54–170 (SSNNNNNNNN…LGGSMGSGSQ (117 aa)). Residues N92, N93, N97, and N101 are each glycosylated (N-linked (GlcNAc...) asparagine). Basic residues predominate over residues 105–123 (IKNKQHHHHSNFRNRRGKS). N127 is a glycosylation site (N-linked (GlcNAc...) asparagine). Residues 144 to 155 (QSSSYDTSELHQ) are compositionally biased toward polar residues. N-linked (GlcNAc...) asparagine glycosylation is present at N280. The 286-residue stretch at 312–597 (YEVIQKIGRG…AKEAMKHPYF (286 aa)) folds into the Protein kinase domain. Residues 318–326 (IGRGKYSEV) and K341 each bind ATP. A glycan (N-linked (GlcNAc...) asparagine) is linked at N390. D429 serves as the catalytic Proton acceptor. N-linked (GlcNAc...) asparagine glycosylation is present at N601.

This sequence belongs to the protein kinase superfamily. CMGC Ser/Thr protein kinase family.

The protein localises to the membrane. It catalyses the reaction L-seryl-[protein] + ATP = O-phospho-L-seryl-[protein] + ADP + H(+). The enzyme catalyses L-threonyl-[protein] + ATP = O-phospho-L-threonyl-[protein] + ADP + H(+). This chain is Probable serine/threonine-protein kinase DDB_G0286481, found in Dictyostelium discoideum (Social amoeba).